A 332-amino-acid chain; its full sequence is Anthranilate phosphoribosyltransferase (332 aa).

Residues Gly79, 82–83 (GD), Thr87, 89–92 (NIST), 107–115 (KHGNRSVSS), and Ser119 contribute to the 5-phospho-alpha-D-ribose 1-diphosphate site. Gly79 lines the anthranilate pocket. Ser91 is a Mg(2+) binding site. Anthranilate is bound at residue Asn110. Arg165 contacts anthranilate. Positions 223 and 224 each coordinate Mg(2+).

It belongs to the anthranilate phosphoribosyltransferase family. As to quaternary structure, homodimer. Mg(2+) is required as a cofactor.

The enzyme catalyses N-(5-phospho-beta-D-ribosyl)anthranilate + diphosphate = 5-phospho-alpha-D-ribose 1-diphosphate + anthranilate. The protein operates within amino-acid biosynthesis; L-tryptophan biosynthesis; L-tryptophan from chorismate: step 2/5. Its function is as follows. Catalyzes the transfer of the phosphoribosyl group of 5-phosphorylribose-1-pyrophosphate (PRPP) to anthranilate to yield N-(5'-phosphoribosyl)-anthranilate (PRA). The protein is Anthranilate phosphoribosyltransferase of Vibrio vulnificus (strain YJ016).